Here is a 279-residue protein sequence, read N- to C-terminus: MFARMASLRALVPVRALLWRAPVRSVHRAAVRETRIVPQLPTFYSANPAHEAHMDRLEALLRKHTKQQARRVAVERTASDRPRWLSFDQYALIGGTSRLKPTQYRQLVSVLDRLHAIDPQLSNGEIAATLEAFLRKSRLEEQNVVRQELDHLGRACAVGRRKTSSAKVWLVRGSGEVLVNGRTFADYFSKIKDRDAIMYPLRVLDAAGKYNIFAAVRGGGVTGQAEAIMHAVAKALVVFNPLLKTRLHRAGVLTRDYRHVERKKPGKRKARKMPAWVKR.

It belongs to the universal ribosomal protein uS9 family.

Its subcellular location is the mitochondrion. This Eremothecium gossypii (strain ATCC 10895 / CBS 109.51 / FGSC 9923 / NRRL Y-1056) (Yeast) protein is Small ribosomal subunit protein uS9m (MRPS9).